The following is a 506-amino-acid chain: Protein MGF 505-9R (506 aa).

ANK repeat units lie at residues 54 to 83 (PTHK…SLQY), 253 to 283 (QVDT…ETVE), and 313 to 343 (FVKK…KINL).

Belongs to the asfivirus MGF 505 family.

Plays a role in virus cell tropism, and may be required for efficient virus replication in macrophages. The protein is Protein MGF 505-9R of Ornithodoros (relapsing fever ticks).